A 259-amino-acid polypeptide reads, in one-letter code: Putative zinc metalloprotease Rip2 (259 aa).

2 helical membrane-spanning segments follow: residues 14-34 (PIFLLVIAVTAAGGALAWIAA) and 39-59 (PLSYVGVFILVIAGWLMSLCL). His60 is a Zn(2+) binding site. Glu61 is a catalytic residue. His64 is a Zn(2+) binding site. The next 4 helical transmembrane spans lie at 96-116 (LGLPVLIIALGGIGFPGGAVY), 129-149 (IVSLAGPAANLVLAVLLLGLT), 159-179 (VFWSGIAFLGFLQVTALVLNL), and 203-223 (LAPAKQWGFLIVVVLLITPAL).

Belongs to the peptidase M50B family. It depends on Zn(2+) as a cofactor.

The protein localises to the cell membrane. This Mycolicibacterium smegmatis (strain ATCC 700084 / mc(2)155) (Mycobacterium smegmatis) protein is Putative zinc metalloprotease Rip2 (rip2).